The primary structure comprises 199 residues: NAD(P)H dehydrogenase (quinone) (199 aa).

The Flavodoxin-like domain occupies 4–190 (VLVLYHSMYG…AIARFQGKHV (187 aa)). Residues 10–15 (SMYGHI) and 79–81 (TRF) each bind FMN. Tyr-12 serves as a coordination point for NAD(+). Position 99 (Trp-99) interacts with substrate. His-134 contacts FMN.

The protein belongs to the WrbA family. It depends on FMN as a cofactor.

The enzyme catalyses a quinone + NADH + H(+) = a quinol + NAD(+). The catalysed reaction is a quinone + NADPH + H(+) = a quinol + NADP(+). This Tolumonas auensis (strain DSM 9187 / NBRC 110442 / TA 4) protein is NAD(P)H dehydrogenase (quinone).